We begin with the raw amino-acid sequence, 89 residues long: Large ribosomal subunit protein bL27 (89 aa).

The segment at 1–21 is disordered; that stretch reads MAHKKAGGSSRNGRDSAGRRL.

It belongs to the bacterial ribosomal protein bL27 family.

The sequence is that of Large ribosomal subunit protein bL27 from Roseobacter denitrificans (strain ATCC 33942 / OCh 114) (Erythrobacter sp. (strain OCh 114)).